Consider the following 263-residue polypeptide: Hydroxyethylthiazole kinase (263 aa).

M39 is a binding site for substrate. The ATP site is built by K115 and T160. G187 lines the substrate pocket.

This sequence belongs to the Thz kinase family. Mg(2+) serves as cofactor.

The catalysed reaction is 5-(2-hydroxyethyl)-4-methylthiazole + ATP = 4-methyl-5-(2-phosphooxyethyl)-thiazole + ADP + H(+). It functions in the pathway cofactor biosynthesis; thiamine diphosphate biosynthesis; 4-methyl-5-(2-phosphoethyl)-thiazole from 5-(2-hydroxyethyl)-4-methylthiazole: step 1/1. Functionally, catalyzes the phosphorylation of the hydroxyl group of 4-methyl-5-beta-hydroxyethylthiazole (THZ). The polypeptide is Hydroxyethylthiazole kinase (Staphylococcus aureus (strain COL)).